Reading from the N-terminus, the 252-residue chain is ATP synthase subunit a (252 aa).

6 consecutive transmembrane segments (helical) span residues 29–49, 87–107, 117–137, 146–166, 196–216, and 219–239; these read FTNV…FLFI, FFPL…IGLF, IMIT…CGFY, LFVP…IEVI, FIVS…LPLI, and VAIT…FTVL.

This sequence belongs to the ATPase A chain family. As to quaternary structure, F-type ATPases have 2 components, CF(1) - the catalytic core - and CF(0) - the membrane proton channel. CF(1) has five subunits: alpha(3), beta(3), gamma(1), delta(1), epsilon(1). CF(0) has three main subunits: a(1), b(2) and c(9-12). The alpha and beta chains form an alternating ring which encloses part of the gamma chain. CF(1) is attached to CF(0) by a central stalk formed by the gamma and epsilon chains, while a peripheral stalk is formed by the delta and b chains.

Its subcellular location is the cell inner membrane. In terms of biological role, key component of the proton channel; it plays a direct role in the translocation of protons across the membrane. The sequence is that of ATP synthase subunit a from Bartonella bacilliformis (strain ATCC 35685 / KC583 / Herrer 020/F12,63).